The primary structure comprises 274 residues: 4-hydroxy-tetrahydrodipicolinate reductase (274 aa).

Residues 8–13, Glu-34, 102–104, and 128–131 each bind NAD(+); these read GALGRM, GTT, and SQNF. Residue His-160 is the Proton donor/acceptor of the active site. A (S)-2,3,4,5-tetrahydrodipicolinate-binding site is contributed by His-161. Lys-164 acts as the Proton donor in catalysis. 170–171 serves as a coordination point for (S)-2,3,4,5-tetrahydrodipicolinate; sequence GT.

Belongs to the DapB family.

The protein resides in the cytoplasm. It carries out the reaction (S)-2,3,4,5-tetrahydrodipicolinate + NAD(+) + H2O = (2S,4S)-4-hydroxy-2,3,4,5-tetrahydrodipicolinate + NADH + H(+). The enzyme catalyses (S)-2,3,4,5-tetrahydrodipicolinate + NADP(+) + H2O = (2S,4S)-4-hydroxy-2,3,4,5-tetrahydrodipicolinate + NADPH + H(+). Its pathway is amino-acid biosynthesis; L-lysine biosynthesis via DAP pathway; (S)-tetrahydrodipicolinate from L-aspartate: step 4/4. Its function is as follows. Catalyzes the conversion of 4-hydroxy-tetrahydrodipicolinate (HTPA) to tetrahydrodipicolinate. This is 4-hydroxy-tetrahydrodipicolinate reductase from Methanocaldococcus jannaschii (strain ATCC 43067 / DSM 2661 / JAL-1 / JCM 10045 / NBRC 100440) (Methanococcus jannaschii).